The following is a 510-amino-acid chain: DNA nucleotidylexotransferase (510 aa).

The segment at 1 to 22 is disordered; sequence MDPLQAVHLGPRKKRPRQLGTP. Residues 11–17 carry the Nuclear localization signal motif; the sequence is PRKKRPR. Residues 27 to 124 enclose the BRCT domain; it reads PYDIRFRDLV…KPVEMMGRHQ (98 aa). S134 carries the phosphoserine modification. Residues 151–510 are mediates interaction with DNTTIP2; it reads SQYACQRRTT…DYIEPWERNA (360 aa). Residues 258 to 262 form an involved in DNA binding region; that stretch reads VGLKT. A 2'-deoxyribonucleoside 5'-triphosphate is bound by residues 333–338 and 342–345; these read GFRRGK and HDVD. Mg(2+) contacts are provided by D343, D345, and D434. A 2'-deoxyribonucleoside 5'-triphosphate is bound at residue 449–450; sequence GW.

Belongs to the DNA polymerase type-X family. In terms of assembly, interacts with PRP19 and DNTTIP1. Forms a ternary complex with DNTTIP2 and core histone. Released from this complex by PCNA. Interacts with TRERF1. It depends on Mg(2+) as a cofactor. Isoform TDT-L: Expressed in the thymus, and, at lower levels, in the bone marrow. Detected in both cycling and noncycling pro-B and pre-B cells (at protein level). Isoform TDT-S: Expressed in both cycling and noncycling pro-B, but not pre-B, cells (at protein level). Not detected in mature peripheral or germinal center B cells.

Its subcellular location is the nucleus. The protein localises to the cytoplasm. It catalyses the reaction DNA(n) + a 2'-deoxyribonucleoside 5'-triphosphate = DNA(n+1) + diphosphate. Functionally, transferase that catalyzes the nontemplated addition of nucleoside triphosphate to coding ends during V(D)J recombination (N addition). Involved in the generation of diversity in the antigen-binding region of immunoglobulin heavy and light chains and T-cell receptors during B- and T-cell development. Does not act on double-stranded DNA with blunt ends. 3'-to-5' DNA exonuclease. Involved in the generation of diversity in the antigen-binding region of immunoglobulin heavy and light chains and T-cell receptors during B- and T-cell development. Acts on single-stranded and double-stranded DNA with 3' or 5' extensions, but not on double-stranded DNA with blunt ends. Attenuates not only isoform TDT-S-catalyzed N addition, but also P (palindromic) addition in coding joins. Lacks terminal transferase activity. This Mus musculus (Mouse) protein is DNA nucleotidylexotransferase (Dntt).